A 512-amino-acid chain; its full sequence is 2,3-bisphosphoglycerate-independent phosphoglycerate mutase (512 aa).

Residues Asp-11 and Ser-61 each contribute to the Mn(2+) site. The active-site Phosphoserine intermediate is the Ser-61. Residues His-122, 152-153, Arg-184, Arg-190, 259-262, and Lys-332 each bind substrate; these read RD and RADR. Mn(2+) contacts are provided by Asp-399, His-403, Asp-440, His-441, and His-459.

Belongs to the BPG-independent phosphoglycerate mutase family. As to quaternary structure, monomer. The cofactor is Mn(2+).

It carries out the reaction (2R)-2-phosphoglycerate = (2R)-3-phosphoglycerate. Its pathway is carbohydrate degradation; glycolysis; pyruvate from D-glyceraldehyde 3-phosphate: step 3/5. Catalyzes the interconversion of 2-phosphoglycerate and 3-phosphoglycerate. The sequence is that of 2,3-bisphosphoglycerate-independent phosphoglycerate mutase from Francisella tularensis subsp. tularensis (strain FSC 198).